Reading from the N-terminus, the 50-residue chain is Large ribosomal subunit protein eL39 (50 aa).

The protein belongs to the eukaryotic ribosomal protein eL39 family.

The protein is Large ribosomal subunit protein eL39 of Methanoculleus marisnigri (strain ATCC 35101 / DSM 1498 / JR1).